A 375-amino-acid chain; its full sequence is Succinyl-diaminopimelate desuccinylase (375 aa).

His66 serves as a coordination point for Zn(2+). Residue Asp68 is part of the active site. Position 99 (Asp99) interacts with Zn(2+). Catalysis depends on Glu133, which acts as the Proton acceptor. Zn(2+) is bound by residues Glu134, Glu162, and His348.

It belongs to the peptidase M20A family. DapE subfamily. As to quaternary structure, homodimer. Zn(2+) is required as a cofactor. The cofactor is Co(2+).

The enzyme catalyses N-succinyl-(2S,6S)-2,6-diaminopimelate + H2O = (2S,6S)-2,6-diaminopimelate + succinate. It participates in amino-acid biosynthesis; L-lysine biosynthesis via DAP pathway; LL-2,6-diaminopimelate from (S)-tetrahydrodipicolinate (succinylase route): step 3/3. Catalyzes the hydrolysis of N-succinyl-L,L-diaminopimelic acid (SDAP), forming succinate and LL-2,6-diaminopimelate (DAP), an intermediate involved in the bacterial biosynthesis of lysine and meso-diaminopimelic acid, an essential component of bacterial cell walls. The chain is Succinyl-diaminopimelate desuccinylase from Cronobacter sakazakii (strain ATCC BAA-894) (Enterobacter sakazakii).